A 194-amino-acid polypeptide reads, in one-letter code: Kallikrein-like enzyme LV-Ka (194 aa).

Cystine bridges form between C7/C99, C44/C192, C78/C146, C110/C125, and C136/C161. A Peptidase S1 domain is found at 36-185; sequence LNQEDKFICP…YTEWIQSIIA (150 aa). The active-site Charge relay system is S140.

This sequence belongs to the peptidase S1 family. Snake venom subfamily. As to quaternary structure, monomer. In terms of processing, N-glycosylated. Expressed by the venom gland.

Its subcellular location is the secreted. Its activity is regulated as follows. Completely inhibited by the serine protease inhibitors NPGB and PMSF, partially inhibited by benzamidines, and weakly or not inhibited by SBTI and EDTA. Its function is as follows. Shows kallikrein-like activity, releasing bradykinin from kininogen. Also activates plasminogen, which is also a plasma kallikrein activity. Is active upon the kallikrein substrates S-2266 and S-2302, suggesting a preference for Arg in P1 position. In vivo, lowers blood pressure after intravenous injection in rat. This is Kallikrein-like enzyme LV-Ka from Lachesis muta muta (Bushmaster).